A 426-amino-acid polypeptide reads, in one-letter code: Glucose-6-phosphate isomerase (426 aa).

Catalysis depends on E282, which acts as the Proton donor. Catalysis depends on residues H303 and K417.

This sequence belongs to the GPI family.

The protein resides in the cytoplasm. The catalysed reaction is alpha-D-glucose 6-phosphate = beta-D-fructose 6-phosphate. The protein operates within carbohydrate biosynthesis; gluconeogenesis. It functions in the pathway carbohydrate degradation; glycolysis; D-glyceraldehyde 3-phosphate and glycerone phosphate from D-glucose: step 2/4. Catalyzes the reversible isomerization of glucose-6-phosphate to fructose-6-phosphate. The protein is Glucose-6-phosphate isomerase of Onion yellows phytoplasma (strain OY-M).